A 157-amino-acid chain; its full sequence is Iron-sulfur cluster repair protein DnrN (157 aa).

The protein belongs to the RIC family.

It is found in the cytoplasm. Functionally, di-iron-containing protein involved in the repair of iron-sulfur clusters damaged by oxidative and nitrosative stress conditions. Required to repair damage caused by nitric oxide to FNR and NsrR transcription factors. This is Iron-sulfur cluster repair protein DnrN (dnrN) from Neisseria gonorrhoeae.